A 247-amino-acid chain; its full sequence is Uridylate kinase (247 aa).

18 to 21 is an ATP binding site; sequence KLSG. G60 serves as a coordination point for UMP. Positions 61 and 65 each coordinate ATP. Residues D80 and 141–148 contribute to the UMP site; that span reads TGNPFFTT. The ATP site is built by T168, Y174, and D177.

It belongs to the UMP kinase family. In terms of assembly, homohexamer.

It localises to the cytoplasm. The enzyme catalyses UMP + ATP = UDP + ADP. The protein operates within pyrimidine metabolism; CTP biosynthesis via de novo pathway; UDP from UMP (UMPK route): step 1/1. Its activity is regulated as follows. Inhibited by UTP. Functionally, catalyzes the reversible phosphorylation of UMP to UDP. This Pseudomonas fluorescens (strain ATCC BAA-477 / NRRL B-23932 / Pf-5) protein is Uridylate kinase.